The primary structure comprises 102 residues: MQKARIKLASTNVRSLEEVANQIRQIAERTGVRMSGPIPLPTKRIRIVTRKSPDGEGSATFDRWELRIHKRLIDIEADERAMRQIMRIRVPEDVTIEIELIS.

The protein belongs to the universal ribosomal protein uS10 family. As to quaternary structure, part of the 30S ribosomal subunit.

Functionally, involved in the binding of tRNA to the ribosomes. In Pyrococcus horikoshii (strain ATCC 700860 / DSM 12428 / JCM 9974 / NBRC 100139 / OT-3), this protein is Small ribosomal subunit protein uS10.